We begin with the raw amino-acid sequence, 357 residues long: Ribosomal RNA large subunit methyltransferase M (357 aa).

Residues serine 183, 216-219 (APGG), aspartate 235, aspartate 255, and aspartate 271 contribute to the S-adenosyl-L-methionine site. Lysine 300 functions as the Proton acceptor in the catalytic mechanism.

The protein belongs to the class I-like SAM-binding methyltransferase superfamily. RNA methyltransferase RlmE family. RlmM subfamily. In terms of assembly, monomer.

Its subcellular location is the cytoplasm. It catalyses the reaction cytidine(2498) in 23S rRNA + S-adenosyl-L-methionine = 2'-O-methylcytidine(2498) in 23S rRNA + S-adenosyl-L-homocysteine + H(+). In terms of biological role, catalyzes the 2'-O-methylation at nucleotide C2498 in 23S rRNA. This chain is Ribosomal RNA large subunit methyltransferase M, found in Pseudomonas syringae pv. syringae (strain B728a).